The following is a 557-amino-acid chain: MGTKTHNSRGKIFMIYLILVSLSLLGLILPFKPLFRITSPSSTLRIDLPSPQVNKNPKWLRLIRNYLPEKRIQVGFLNIDEKERESYEARGPLVLKNIHVPLDHIPKNVTWKSLYPEWINEEASTCPEIPLPQPEGSDANVDVIVARVPCDGWSANKGLRDVFRLQVNLAAANLAVQSGLRTVNQAVYVVFIGSCGPMHEIFPCDERVMRVEDYWVYKPYLPRLKQKLLMPVGSCQIAPSFAQFGQEAWRPKHEDNLASKAVTALPRRLRVAYVTVLHSSEAYVCGAIALAQSIRQSGSHKDMILLHDHTITNKSLIGLSAAGWNLRLIDRIRSPFSQKDSYNEWNYSKLRVWQVTDYDKLVFIDADFIILKKLDHLFYYPQLSASGNDKVLFNSGIMVLEPSACMFKDLMEKSFKIESYNGGDQGFLNEIFVWWHRLSKRVNTMKYFDEKNHRRHDLPENVEGLHYLGLKPWVCYRDYDCNWDISERRVFASDSVHEKWWKVYDKMSEQLKGYCGLNKNMEKRIEKWRRIAKNNSLPDRHWEIEVRDPRKTNLLVQ.

The chain crosses the membrane as a helical; Signal-anchor for type II membrane protein span at residues 11-31; the sequence is KIFMIYLILVSLSLLGLILPF. Residues Asp-365 and Asp-367 each contribute to the Mn(2+) site. Substrate-binding positions include 365-367, 394-396, 421-425, and 466-471; these read DAD, NSG, NGGDQ, and HYLGLK. His-466 lines the Mn(2+) pocket.

It belongs to the glycosyltransferase 8 family. Glycogenin subfamily. Requires Mn(2+) as cofactor.

The protein resides in the golgi apparatus membrane. Its function is as follows. May be involved in the substitutions of the xylan backbone in stem glucuronoxylan. This is Putative UDP-glucuronate:xylan alpha-glucuronosyltransferase 4 (GUX4) from Arabidopsis thaliana (Mouse-ear cress).